Consider the following 332-residue polypeptide: 2,3-diketo-L-gulonate reductase (332 aa).

Catalysis depends on His44, which acts as the Proton donor. NAD(+) is bound by residues 168 to 174 (ITMVDMS), 224 to 225 (WK), and 304 to 306 (GHE).

Belongs to the LDH2/MDH2 oxidoreductase family. DlgD subfamily. In terms of assembly, homodimer.

Its subcellular location is the cytoplasm. It carries out the reaction 3-dehydro-L-gulonate + NAD(+) = 2,3-dioxo-L-gulonate + NADH + H(+). It catalyses the reaction 3-dehydro-L-gulonate + NADP(+) = 2,3-dioxo-L-gulonate + NADPH + H(+). In terms of biological role, catalyzes the reduction of 2,3-diketo-L-gulonate in the presence of NADH, to form 3-keto-L-gulonate. In Haemophilus influenzae (strain ATCC 51907 / DSM 11121 / KW20 / Rd), this protein is 2,3-diketo-L-gulonate reductase.